The sequence spans 549 residues: MAFVFYCFLQVLVSWVIHAVQPFCLPECTCSEESFGRSLQCMSMSLGKIPDNFPEELKQVRIENSPLFELSQGFFTNMSSLEYLWLNFNNVTVIHLGALEDLPELRELRLEGNKLRSVPWTAFRATPLLRVLDLKHNRIDSVPELALQFLTNLIYLDISSNRLTVVSKGVFLNWPAYQKRQQLGCGAEFLSNMVLSLHNNPWLCDCRLRGLAQFVKSVGPPFILVNSYLVCQGPVSKAGQLLHETELGVCMKPTISTPSVNVTIQVGKNVTLQCFAQASPSPTIAWKYPLSTWREFDVLASPIAEGIILSQLVIPAAQLVDGGNYTCMAFNSIGRSSLVILLYVQPAQAMPGLHFLSTSSEVSAYVDLRVVKQTVHGILLQWLTVTNLAEEQWFTLYITSDEALRKKVVHIGPGINTYAVDDLLPATKYKACLSLRNQPPSQGQCVVFVTGKDSGGLEGREHLLHVTVVLCAVLLALPVGAYVWVSQGPYNFSEWCWRRCPLHRKTLRCPQAVPQCKDNSFKDPSGVYEDGESHRVMEEDEEVEKEGIS.

Residues 1–22 (MAFVFYCFLQVLVSWVIHAVQP) form the signal peptide. The region spanning 23–54 (FCLPECTCSEESFGRSLQCMSMSLGKIPDNFP) is the LRRNT domain. 4 LRR repeats span residues 80 to 103 (SLEY…EDLP), 104 to 125 (ELRE…AFRA), 128 to 149 (LLRV…ALQF), and 152 to 173 (NLIY…VFLN). Asn-90 carries N-linked (GlcNAc...) asparagine glycosylation. An LRRCT domain is found at 200–252 (NPWLCDCRLRGLAQFVKSVGPPFILVNSYLVCQGPVSKAGQLLHETELGVCMK). The Ig-like domain occupies 253–339 (PTISTPSVNV…FNSIGRSSLV (87 aa)). A glycan (N-linked (GlcNAc...) asparagine) is linked at Asn-261. The cysteines at positions 274 and 327 are disulfide-linked. The Fibronectin type-III domain maps to 361 to 447 (EVSAYVDLRV…QPPSQGQCVV (87 aa)). A helical transmembrane segment spans residues 463–483 (LLHVTVVLCAVLLALPVGAYV). An N-linked (GlcNAc...) asparagine glycan is attached at Asn-491. The interval 521–549 (FKDPSGVYEDGESHRVMEEDEEVEKEGIS) is disordered. Acidic residues predominate over residues 538–549 (EEDEEVEKEGIS).

Interacts with LRIT1; may form a heterodimer with LRIT1.

Its subcellular location is the membrane. This is Leucine-rich repeat, immunoglobulin-like domain and transmembrane domain-containing protein 2 (Lrit2) from Mus musculus (Mouse).